The sequence spans 193 residues: Protein TEX261 (193 aa).

The next 5 helical transmembrane spans lie at 1–21 (MVGVTLANVLPVCLALLPPPA), 39–59 (SRIIKYMIWFSTAVLIGLYVF), 67–87 (IGVGLFTNLVYFGLLQTFPFI), 94–114 (FILSCGLVVVNHYLAFQFFAE), and 122–142 (VLAYFTFCLWIIPFAFFVSLS).

It belongs to the SVP26 family.

The protein localises to the membrane. The polypeptide is Protein TEX261 (TEX261) (Bos taurus (Bovine)).